A 99-amino-acid chain; its full sequence is Ribosomal processing cysteine protease Prp (99 aa).

His16 serves as the catalytic Proton donor. Cys28 acts as the Nucleophile in catalysis.

It belongs to the Prp family. As to quaternary structure, homodimer.

Functionally, an essential cysteine protease that cleaves the N-terminus from ribosomal protein bL27. The polypeptide is Ribosomal processing cysteine protease Prp (Mycoplasma genitalium (strain ATCC 33530 / DSM 19775 / NCTC 10195 / G37) (Mycoplasmoides genitalium)).